The sequence spans 57 residues: Large ribosomal subunit protein eL20 (57 aa).

It belongs to the eukaryotic ribosomal protein eL20 family. In terms of assembly, part of the 50S ribosomal subunit. Binds 23S rRNA.

The polypeptide is Large ribosomal subunit protein eL20 (Halorhabdus utahensis (strain DSM 12940 / JCM 11049 / AX-2)).